The sequence spans 464 residues: uncharacterized protein (464 aa).

The next 12 helical transmembrane spans lie at 7–27 (VLNV…LRTL), 37–57 (LVFY…LVAA), 94–114 (VVWY…LIAP), 121–141 (FYLL…NCFG), 153–173 (ASIG…VWIF), 196–216 (LSLF…AVHA), 231–251 (FYSA…IVIV), 282–302 (VIAV…IIGP), 329–349 (VAIL…FILL), 359–379 (LSDL…AAAI), 401–421 (MSLI…VGFI), and 432–452 (FLFE…PWLF).

This sequence belongs to the amino acid-polyamine-organocation (APC) superfamily.

It localises to the cell membrane. This is an uncharacterized protein from Legionella pneumophila subsp. pneumophila (strain Philadelphia 1 / ATCC 33152 / DSM 7513).